The chain runs to 172 residues: Cytochrome c oxidase subunit 4 isoform 2, mitochondrial (172 aa).

Residues 1-34 (MFSRAARSLVMRTGLRTRGTGTHSPGDAAGSQRR) constitute a mitochondrion transit peptide. Over residues 13 to 22 (TGLRTRGTGT) the composition is skewed to low complexity. The segment at 13 to 32 (TGLRTRGTGTHSPGDAAGSQ) is disordered. Over 35–101 (MTPYVDCYAQ…TFAEMNHRSN (67 aa)) the chain is Mitochondrial matrix. The helical transmembrane segment at 102-127 (EWKTVMGCVFFFIGFTALVIWWQRVY) threads the bilayer. Over 128-172 (VFPKKVVTLTEERKAQQLQRLLDMKSNPIQGLAAHWDYEKKEWKK) the chain is Mitochondrial intermembrane.

The protein belongs to the cytochrome c oxidase IV family. As to quaternary structure, component of the cytochrome c oxidase (complex IV, CIV), a multisubunit enzyme composed of 14 subunits. The complex is composed of a catalytic core of 3 subunits MT-CO1, MT-CO2 and MT-CO3, encoded in the mitochondrial DNA, and 11 supernumerary subunits COX4I, COX5A, COX5B, COX6A, COX6B, COX6C, COX7A, COX7B, COX7C, COX8 and NDUFA4, which are encoded in the nuclear genome. The complex exists as a monomer or a dimer and forms supercomplexes (SCs) in the inner mitochondrial membrane with NADH-ubiquinone oxidoreductase (complex I, CI) and ubiquinol-cytochrome c oxidoreductase (cytochrome b-c1 complex, complex III, CIII), resulting in different assemblies (supercomplex SCI(1)III(2)IV(1) and megacomplex MCI(2)III(2)IV(2)).

It is found in the mitochondrion inner membrane. It functions in the pathway energy metabolism; oxidative phosphorylation. Functionally, component of the cytochrome c oxidase, the last enzyme in the mitochondrial electron transport chain which drives oxidative phosphorylation. The respiratory chain contains 3 multisubunit complexes succinate dehydrogenase (complex II, CII), ubiquinol-cytochrome c oxidoreductase (cytochrome b-c1 complex, complex III, CIII) and cytochrome c oxidase (complex IV, CIV), that cooperate to transfer electrons derived from NADH and succinate to molecular oxygen, creating an electrochemical gradient over the inner membrane that drives transmembrane transport and the ATP synthase. Cytochrome c oxidase is the component of the respiratory chain that catalyzes the reduction of oxygen to water. Electrons originating from reduced cytochrome c in the intermembrane space (IMS) are transferred via the dinuclear copper A center (CU(A)) of subunit 2 and heme A of subunit 1 to the active site in subunit 1, a binuclear center (BNC) formed by heme A3 and copper B (CU(B)). The BNC reduces molecular oxygen to 2 water molecules using 4 electrons from cytochrome c in the IMS and 4 protons from the mitochondrial matrix. The polypeptide is Cytochrome c oxidase subunit 4 isoform 2, mitochondrial (Cox4i2) (Mus musculus (Mouse)).